Consider the following 334-residue polypeptide: Formamidase (334 aa).

The CN hydrolase domain maps to 14-260 (FLVAAIQFPV…WEIVTGEIYP (247 aa)). The active-site Proton acceptor is Glu-60. Lys-133 functions as the Proton donor in the catalytic mechanism. Cys-166 acts as the Nucleophile in catalysis.

The protein belongs to the carbon-nitrogen hydrolase superfamily. Aliphatic amidase family. As to quaternary structure, homotetramer.

It carries out the reaction formamide + H2O = formate + NH4(+). With respect to regulation, inhibited by iodoacetate. Appears to be regulated by the fur protein, but this effect is not mediated at the transcriptional level. Its function is as follows. Is an aliphatic amidase with a restricted substrate specificity, as it only hydrolyzes formamide. Probably involved in the nitrogen metabolism of H.pylori. In Helicobacter pylori (strain ATCC 700392 / 26695) (Campylobacter pylori), this protein is Formamidase (amiF).